Consider the following 183-residue polypeptide: Ribosome rescue factor SmrB (183 aa).

The region spanning 98 to 173 is the Smr domain; sequence LDLHGLTQMQ…GDAALLVLIE (76 aa).

This sequence belongs to the SmrB family. As to quaternary structure, associates with collided ribosomes, but not with correctly translating polysomes.

Its function is as follows. Acts as a ribosome collision sensor. Detects stalled/collided disomes (pairs of ribosomes where the leading ribosome is stalled and a second ribosome has collided with it) and endonucleolytically cleaves mRNA at the 5' boundary of the stalled ribosome. Stalled/collided disomes form a new interface (primarily via the 30S subunits) that binds SmrB. Cleaved mRNA becomes available for tmRNA ligation, leading to ribosomal subunit dissociation and rescue of stalled ribosomes. The sequence is that of Ribosome rescue factor SmrB from Enterobacter sp. (strain 638).